The chain runs to 263 residues: Endonuclease 8 (263 aa).

The active-site Schiff-base intermediate with DNA is the proline 2. Glutamate 3 (proton donor) is an active-site residue. Lysine 53 (proton donor; for beta-elimination activity) is an active-site residue. The DNA site is built by glutamine 70, arginine 125, and asparagine 169. The segment at 229-263 (KVFHRDGERCERCGGIIEKTTLSSRPFYWCPGCQH) adopts an FPG-type zinc-finger fold. The active-site Proton donor; for delta-elimination activity is arginine 253.

It belongs to the FPG family. Zn(2+) is required as a cofactor.

It catalyses the reaction 2'-deoxyribonucleotide-(2'-deoxyribose 5'-phosphate)-2'-deoxyribonucleotide-DNA = a 3'-end 2'-deoxyribonucleotide-(2,3-dehydro-2,3-deoxyribose 5'-phosphate)-DNA + a 5'-end 5'-phospho-2'-deoxyribonucleoside-DNA + H(+). In terms of biological role, involved in base excision repair of DNA damaged by oxidation or by mutagenic agents. Acts as a DNA glycosylase that recognizes and removes damaged bases. Has a preference for oxidized pyrimidines, such as thymine glycol, 5,6-dihydrouracil and 5,6-dihydrothymine. Has AP (apurinic/apyrimidinic) lyase activity and introduces nicks in the DNA strand. Cleaves the DNA backbone by beta-delta elimination to generate a single-strand break at the site of the removed base with both 3'- and 5'-phosphates. This chain is Endonuclease 8, found in Klebsiella pneumoniae subsp. pneumoniae (strain ATCC 700721 / MGH 78578).